The sequence spans 289 residues: Deoxyuridine 5'-triphosphate nucleotidohydrolase (289 aa).

Substrate-binding positions include 176–178 (RSG) and 283–284 (FG).

This sequence belongs to the dUTPase family. Requires Mg(2+) as cofactor.

It catalyses the reaction dUTP + H2O = dUMP + diphosphate + H(+). Functionally, involved in nucleotide metabolism: produces dUMP, the immediate precursor of thymidine nucleotides and decreases the intracellular concentration of dUTP to avoid uracil incorporation into viral DNA. This Equus caballus (Horse) protein is Deoxyuridine 5'-triphosphate nucleotidohydrolase.